A 505-amino-acid chain; its full sequence is Beta-glucosidase 18 (505 aa).

Residues 1–26 (MAGGSKTRIHASLVSTLLLLLPLASA) form the signal peptide. An a beta-D-glucoside-binding site is contributed by glutamine 46. Residue asparagine 55 is glycosylated (N-linked (GlcNAc...) asparagine). A beta-D-glucoside is bound by residues histidine 148 and 193-194 (NE). Glutamate 194 (proton donor) is an active-site residue. Cysteine 213 and cysteine 220 are disulfide-bonded. Tyrosine 337 provides a ligand contact to a beta-D-glucoside. Cysteine 345 and cysteine 350 form a disulfide bridge. A beta-D-glucoside contacts are provided by residues glutamate 408, tryptophan 457, 464–465 (EW), and phenylalanine 473. Glutamate 408 functions as the Nucleophile in the catalytic mechanism.

Belongs to the glycosyl hydrolase 1 family. Expressed in roots, leaves, flowers and pollen.

The enzyme catalyses Hydrolysis of terminal, non-reducing beta-D-glucosyl residues with release of beta-D-glucose.. Its function is as follows. Hydrolyzes glycosides and monolignol glucosides. Can hydrolyze para-nitrophenyl beta-D-glucopyranoside (pNPGlc) in vitro. Hydrolyzes para-nitrophenyl beta-D-fucopyranoside, para-nitrophenyl beta-D-galactopyranoside and para-nitrophenyl beta-D-xylopyranoside in vitro. Hydrolyzes the monolignol glucosides coniferin and syringin with high catalytic efficiencies. The protein is Beta-glucosidase 18 of Oryza sativa subsp. japonica (Rice).